Reading from the N-terminus, the 326-residue chain is Fructose-1,6-bisphosphatase class 1 (326 aa).

The Mg(2+) site is built by Glu90, Asp111, Leu113, and Asp114. Substrate contacts are provided by residues 114–117, Tyr222, and Lys253; that span reads DGSS. Glu259 contacts Mg(2+).

Belongs to the FBPase class 1 family. As to quaternary structure, homotetramer. It depends on Mg(2+) as a cofactor.

It is found in the cytoplasm. It catalyses the reaction beta-D-fructose 1,6-bisphosphate + H2O = beta-D-fructose 6-phosphate + phosphate. Its pathway is carbohydrate biosynthesis; gluconeogenesis. The sequence is that of Fructose-1,6-bisphosphatase class 1 from Citrifermentans bemidjiense (strain ATCC BAA-1014 / DSM 16622 / JCM 12645 / Bem) (Geobacter bemidjiensis).